A 235-amino-acid polypeptide reads, in one-letter code: Phosphoribosylaminoimidazole-succinocarboxamide synthase (235 aa).

Belongs to the SAICAR synthetase family.

The catalysed reaction is 5-amino-1-(5-phospho-D-ribosyl)imidazole-4-carboxylate + L-aspartate + ATP = (2S)-2-[5-amino-1-(5-phospho-beta-D-ribosyl)imidazole-4-carboxamido]succinate + ADP + phosphate + 2 H(+). Its pathway is purine metabolism; IMP biosynthesis via de novo pathway; 5-amino-1-(5-phospho-D-ribosyl)imidazole-4-carboxamide from 5-amino-1-(5-phospho-D-ribosyl)imidazole-4-carboxylate: step 1/2. The polypeptide is Phosphoribosylaminoimidazole-succinocarboxamide synthase (Clostridium kluyveri (strain NBRC 12016)).